A 593-amino-acid polypeptide reads, in one-letter code: Bifunctional purine biosynthesis protein ATIC (593 aa).

The region spanning 1–147 (MAARQQLALL…KNHARVTVVC (147 aa)) is the MGS-like domain. Positions 1-199 (MAARQQLALL…ISDYFRKEYS (199 aa)) are IMP cyclohydrolase. IMP-binding positions include 13–15 (SEK), 35–38 (SGGT), 65–68 (RVKT), 102–103 (CN), and 126–127 (DI). K138 functions as the Proton donor/acceptor; for FAICAR cyclization activity in the catalytic mechanism. Position 200 is an N6-acetyllysine (K200). The AICAR formyltransferase stretch occupies residues 200–593 (KGVSQLPLRY…IHTNLRLFHH (394 aa)). Residues 208–209 (RY), H268, G317, D340, N432, and R452 contribute to the 5-amino-1-(5-phospho-beta-D-ribosyl)imidazole-4-carboxamide site. H268 functions as the Proton acceptor; for AICAR formyltransferase activity in the catalytic mechanism. (6R)-10-formyltetrahydrofolate is bound at residue I453. Position 542 (F542) interacts with 5-amino-1-(5-phospho-beta-D-ribosyl)imidazole-4-carboxamide. Residues D547 and 566–567 (SA) contribute to the (6R)-10-formyltetrahydrofolate site. A 5-amino-1-(5-phospho-beta-D-ribosyl)imidazole-4-carboxamide-binding site is contributed by R589.

Belongs to the PurH family. Homodimer. Associates with internalized INSR complexes on Golgi/endosomal membranes. Interacts with INSR; ATIC together with PRKAA2/AMPK2 and HACD3/PTPLAD1 is proposed to be part of a signaling network regulating INSR autophosphorylation and endocytosis.

The protein resides in the cytoplasm. Its subcellular location is the cytosol. It catalyses the reaction (6R)-10-formyltetrahydrofolate + 5-amino-1-(5-phospho-beta-D-ribosyl)imidazole-4-carboxamide = 5-formamido-1-(5-phospho-D-ribosyl)imidazole-4-carboxamide + (6S)-5,6,7,8-tetrahydrofolate. It carries out the reaction 10-formyldihydrofolate + 5-amino-1-(5-phospho-beta-D-ribosyl)imidazole-4-carboxamide = 5-formamido-1-(5-phospho-D-ribosyl)imidazole-4-carboxamide + 7,8-dihydrofolate. The enzyme catalyses IMP + H2O = 5-formamido-1-(5-phospho-D-ribosyl)imidazole-4-carboxamide. The protein operates within purine metabolism; IMP biosynthesis via de novo pathway; 5-formamido-1-(5-phospho-D-ribosyl)imidazole-4-carboxamide from 5-amino-1-(5-phospho-D-ribosyl)imidazole-4-carboxamide (10-formyl THF route): step 1/1. It functions in the pathway purine metabolism; IMP biosynthesis via de novo pathway; IMP from 5-formamido-1-(5-phospho-D-ribosyl)imidazole-4-carboxamide: step 1/1. With respect to regulation, AMP and XMP inhibit AICAR formyltransferase activity. AICAR formyltransferase activity is competitively inhibited by 2-[5-hydroxy-3-methyl-1-(2-methyl-4-sulfo-phenyl)-1H-pyrazol-4-ylazo]-4-sulfo-benzoic acid (326203-A). FAICAR cyclization is competitively inhibited by 1,5-dihydroimidazo[4,5-c][1,2,6]thiadiazin-4(3H)-one-2,2-dioxide and the corresponding nucleoside and nucleoside monophosphate. Functionally, bifunctional enzyme that catalyzes the last two steps of purine biosynthesis. Acts as a transformylase that incorporates a formyl group to the AMP analog AICAR (5-amino-1-(5-phospho-beta-D-ribosyl)imidazole-4-carboxamide) to produce the intermediate formyl-AICAR (FAICAR). Can use both 10-formyldihydrofolate and 10-formyltetrahydrofolate as the formyl donor in this reaction. Also catalyzes the cyclization of FAICAR to inosine monophosphate (IMP). Promotes insulin receptor/INSR autophosphorylation and is involved in INSR internalization. The chain is Bifunctional purine biosynthesis protein ATIC (ATIC) from Gallus gallus (Chicken).